Reading from the N-terminus, the 202-residue chain is Orotate phosphoribosyltransferase (202 aa).

5-phospho-alpha-D-ribose 1-diphosphate is bound by residues Lys93 and 113-121 (EDIITTGGS). Orotate contacts are provided by Thr117 and Arg145.

This sequence belongs to the purine/pyrimidine phosphoribosyltransferase family. PyrE subfamily. Homodimer. It depends on Mg(2+) as a cofactor.

The catalysed reaction is orotidine 5'-phosphate + diphosphate = orotate + 5-phospho-alpha-D-ribose 1-diphosphate. The protein operates within pyrimidine metabolism; UMP biosynthesis via de novo pathway; UMP from orotate: step 1/2. Its function is as follows. Catalyzes the transfer of a ribosyl phosphate group from 5-phosphoribose 1-diphosphate to orotate, leading to the formation of orotidine monophosphate (OMP). The polypeptide is Orotate phosphoribosyltransferase (Campylobacter fetus subsp. fetus (strain 82-40)).